Reading from the N-terminus, the 1068-residue chain is Carbamoyl phosphate synthase large chain (1068 aa).

Positions 1 to 401 are carboxyphosphate synthetic domain; the sequence is MPLNKDIKKV…AFLKGTRSLE (401 aa). ATP-binding residues include arginine 129, arginine 169, glycine 175, glycine 176, lysine 208, valine 210, glutamate 215, glycine 241, isoleucine 242, histidine 243, glutamine 284, and glutamate 298. The ATP-grasp 1 domain maps to 133–327; the sequence is RNVMSRINGP…IAKVASKIAL (195 aa). Residues glutamine 284, glutamate 298, and asparagine 300 each contribute to the Mg(2+) site. Mn(2+) is bound by residues glutamine 284, glutamate 298, and asparagine 300. The oligomerization domain stretch occupies residues 402–549; the sequence is IGKYSLEHKK…YSTYDVYDEV (148 aa). The interval 550–932 is carbamoyl phosphate synthetic domain; the sequence is EVSKNKKVIV…ALYKGFIGAN (383 aa). Residues 674–864 enclose the ATP-grasp 2 domain; sequence DELLEKLKIA…IVDIATRVML (191 aa). ATP contacts are provided by arginine 710, lysine 749, leucine 751, glutamate 755, glycine 780, valine 781, histidine 782, serine 783, glutamine 823, and glutamate 835. Mg(2+) is bound by residues glutamine 823, glutamate 835, and asparagine 837. Mn(2+) is bound by residues glutamine 823, glutamate 835, and asparagine 837. The 136-residue stretch at 933 to 1068 folds into the MGS-like domain; it reads MSIKKEKGTV…ETLYIFDLSN (136 aa). An allosteric domain region spans residues 933 to 1068; the sequence is MSIKKEKGTV…ETLYIFDLSN (136 aa).

Belongs to the CarB family. In terms of assembly, composed of two chains; the small (or glutamine) chain promotes the hydrolysis of glutamine to ammonia, which is used by the large (or ammonia) chain to synthesize carbamoyl phosphate. Tetramer of heterodimers (alpha,beta)4. It depends on Mg(2+) as a cofactor. The cofactor is Mn(2+).

It catalyses the reaction hydrogencarbonate + L-glutamine + 2 ATP + H2O = carbamoyl phosphate + L-glutamate + 2 ADP + phosphate + 2 H(+). The catalysed reaction is hydrogencarbonate + NH4(+) + 2 ATP = carbamoyl phosphate + 2 ADP + phosphate + 2 H(+). The protein operates within amino-acid biosynthesis; L-arginine biosynthesis; carbamoyl phosphate from bicarbonate: step 1/1. It participates in pyrimidine metabolism; UMP biosynthesis via de novo pathway; (S)-dihydroorotate from bicarbonate: step 1/3. Large subunit of the glutamine-dependent carbamoyl phosphate synthetase (CPSase). CPSase catalyzes the formation of carbamoyl phosphate from the ammonia moiety of glutamine, carbonate, and phosphate donated by ATP, constituting the first step of 2 biosynthetic pathways, one leading to arginine and/or urea and the other to pyrimidine nucleotides. The large subunit (synthetase) binds the substrates ammonia (free or transferred from glutamine from the small subunit), hydrogencarbonate and ATP and carries out an ATP-coupled ligase reaction, activating hydrogencarbonate by forming carboxy phosphate which reacts with ammonia to form carbamoyl phosphate. In Clostridium botulinum (strain Kyoto / Type A2), this protein is Carbamoyl phosphate synthase large chain.